The primary structure comprises 445 residues: tRNA(Ile)-lysidine synthase (445 aa).

S38–S43 serves as a coordination point for ATP.

Belongs to the tRNA(Ile)-lysidine synthase family.

Its subcellular location is the cytoplasm. It carries out the reaction cytidine(34) in tRNA(Ile2) + L-lysine + ATP = lysidine(34) in tRNA(Ile2) + AMP + diphosphate + H(+). Its function is as follows. Ligates lysine onto the cytidine present at position 34 of the AUA codon-specific tRNA(Ile) that contains the anticodon CAU, in an ATP-dependent manner. Cytidine is converted to lysidine, thus changing the amino acid specificity of the tRNA from methionine to isoleucine. In Neisseria gonorrhoeae (strain ATCC 700825 / FA 1090), this protein is tRNA(Ile)-lysidine synthase.